Reading from the N-terminus, the 524-residue chain is Keratin, type II cytoskeletal 71 (524 aa).

Positions 1–130 (MNRQFTCKSG…DPEIQKVRAQ (130 aa)) are head. The segment at 131–166 (EREQIKALNNKFASFIDKVRFLEQQNQVLETKWELL) is coil 1A. An IF rod domain is found at 131 to 444 (EREQIKALNN…KLLESEECRM (314 aa)). The linker 1 stretch occupies residues 167–185 (QQLDLNNCKNNLEPILEGY). The interval 186–277 (ISNLRKQLET…CLYEAEIAQI (92 aa)) is coil 1B. Positions 278-301 (QSHISDMSVILSMDNNRDLNLDSI) are linker 12. Residues 302 to 440 (IDEVRAQYEE…ATYRKLLESE (139 aa)) form a coil 2 region. Residues 441 to 524 (ECRMSGEFPS…QSASSKKASR (84 aa)) are tail. The interval 491–524 (VRGGEGRSRGSTSDYKDTLGKGSSQSASSKKASR) is disordered. Basic and acidic residues predominate over residues 494 to 509 (GEGRSRGSTSDYKDTL). Residues 510 to 524 (GKGSSQSASSKKASR) show a composition bias toward low complexity.

This sequence belongs to the intermediate filament family. As to quaternary structure, heterodimer of a type I and a type II keratin. Associates with KRT16 and/or KRT17.

It localises to the cytoplasm. It is found in the cytoskeleton. Plays a central role in hair formation. Essential component of keratin intermediate filaments in the inner root sheath (IRS) of the hair follicle. The polypeptide is Keratin, type II cytoskeletal 71 (KRT71) (Felis catus (Cat)).